A 72-amino-acid polypeptide reads, in one-letter code: Teretoxin Tsu11.2 (72 aa).

Residues 1 to 21 (MMAKATMAFCFLLMLTTVMLP) form the signal peptide. A propeptide spanning residues 22-30 (TEGKTIAGR) is cleaved from the precursor.

It belongs to the teretoxin H (TH) superfamily. Post-translationally, contains 4 disulfide bonds. Expressed by the venom duct.

Its subcellular location is the secreted. The polypeptide is Teretoxin Tsu11.2 (Terebra subulata (Chocolate spotted auger)).